The sequence spans 186 residues: Shikimate kinase (186 aa).

Residue 21 to 26 (GVGKTT) coordinates ATP. Mg(2+) is bound at residue Thr-25. Positions 43, 67, and 90 each coordinate substrate. Position 129 (Arg-129) interacts with ATP. Residue Arg-147 coordinates substrate.

The protein belongs to the shikimate kinase family. Monomer. It depends on Mg(2+) as a cofactor.

It is found in the cytoplasm. The enzyme catalyses shikimate + ATP = 3-phosphoshikimate + ADP + H(+). It functions in the pathway metabolic intermediate biosynthesis; chorismate biosynthesis; chorismate from D-erythrose 4-phosphate and phosphoenolpyruvate: step 5/7. Catalyzes the specific phosphorylation of the 3-hydroxyl group of shikimic acid using ATP as a cosubstrate. This chain is Shikimate kinase, found in Bacillus subtilis (strain 168).